A 223-amino-acid polypeptide reads, in one-letter code: Probable transaldolase (223 aa).

Lysine 91 serves as the catalytic Schiff-base intermediate with substrate.

It belongs to the transaldolase family. Type 3B subfamily.

It is found in the cytoplasm. It carries out the reaction D-sedoheptulose 7-phosphate + D-glyceraldehyde 3-phosphate = D-erythrose 4-phosphate + beta-D-fructose 6-phosphate. The protein operates within carbohydrate degradation; pentose phosphate pathway; D-glyceraldehyde 3-phosphate and beta-D-fructose 6-phosphate from D-ribose 5-phosphate and D-xylulose 5-phosphate (non-oxidative stage): step 2/3. Its function is as follows. Transaldolase is important for the balance of metabolites in the pentose-phosphate pathway. The sequence is that of Probable transaldolase from Prosthecochloris aestuarii (strain DSM 271 / SK 413).